The chain runs to 184 residues: Shikimate kinase (184 aa).

An ATP-binding site is contributed by 17–22 (GAGKTT). Thr21 lines the Mg(2+) pocket. The substrate site is built by Asp39, Arg63, and Gly85. ATP is bound at residue Arg123. Position 142 (Arg142) interacts with substrate.

This sequence belongs to the shikimate kinase family. As to quaternary structure, monomer. The cofactor is Mg(2+).

The protein localises to the cytoplasm. It carries out the reaction shikimate + ATP = 3-phosphoshikimate + ADP + H(+). The protein operates within metabolic intermediate biosynthesis; chorismate biosynthesis; chorismate from D-erythrose 4-phosphate and phosphoenolpyruvate: step 5/7. Its function is as follows. Catalyzes the specific phosphorylation of the 3-hydroxyl group of shikimic acid using ATP as a cosubstrate. The polypeptide is Shikimate kinase (Burkholderia thailandensis (strain ATCC 700388 / DSM 13276 / CCUG 48851 / CIP 106301 / E264)).